Consider the following 643-residue polypeptide: U3 small nucleolar RNA-associated protein 5 (643 aa).

6 WD repeats span residues 14–54 (GQYL…LYLE), 55–98 (DSKL…VTYK), 186–225 (GHVS…TKCV), 227–266 (VAES…SSTK), 340–389 (SADR…LEQE), and 471–511 (RLKP…IHGG). The disordered stretch occupies residues 565–643 (HSSEPVVEED…EAGYSDVEME (79 aa)). The segment covering 570 to 611 (VVEEDEDDVEYNEELDDAGLIEDGEESYGSEEEEEGDSDNEE) has biased composition (acidic residues). Residues 612 to 626 (EQKHTSSKQDGRLET) are compositionally biased toward basic and acidic residues. The span at 627 to 643 (EQSDGEEEAGYSDVEME) shows a compositional bias: acidic residues.

This sequence belongs to the UTP5 family. As to quaternary structure, interacts with snoRNA U3. Interacts with MPP10. Component of the ribosomal small subunit (SSU) processome composed of at least 40 protein subunits and snoRNA U3. In the absence of snoRNA3, forms a complex with other t-UTPs. This complex can associate with pre-18S ribosomal RNAs.

The protein localises to the nucleus. It is found in the nucleolus. In terms of biological role, involved in nucleolar processing of pre-18S ribosomal RNA. Required for optimal pre-ribosomal RNA transcription by RNA polymerase I together with a subset of U3 proteins required for transcription (t-UTPs). The sequence is that of U3 small nucleolar RNA-associated protein 5 (UTP5) from Saccharomyces cerevisiae (strain ATCC 204508 / S288c) (Baker's yeast).